The chain runs to 247 residues: AGEDHGRGPYVQADLAYAYEHITRDYPDAAGANKGKISTVSDYFRNIRTHSIHPRVSVGYDFGGWRIAADYARYRKWHNNKYSVNIKELERKNNKTSGGDQLNIKYQKTEHQENGTFHAVSSLGLSTVYDFRVNDKFKPYIGVRVGYGHVRHGIDSTKKTKNTLTAYHGAGTKPTYYDDIDSGKNQKNTYRQNRSSRRLGFGAMAGVGIDVAPGLTLDAGYRYHYWGRLENTRFKTHEASLGVRYRF.

Residue alanine 1 is a signal peptide.

Belongs to the opacity porin family.

Its subcellular location is the cell outer membrane. Its function is as follows. Implicated in a number of adherence functions. OPA proteins are implicated in pathogenesis and are subject to phase variation. This chain is Opacity protein opA52 (opaG), found in Neisseria gonorrhoeae.